Consider the following 249-residue polypeptide: ATP synthase subunit a (249 aa).

6 helical membrane passes run 30 to 50 (QSPVMMIVASVLVLAFLYVGM), 86 to 106 (FFPFIFTLFFFILAGNYLGLL), 115 to 135 (HIAVTLALALLVFVLAVIVSL), 142 to 162 (FFAHFMPAGAPVALAPLLVPI), 191 to 211 (MFAAFTIMLAGLGLFGDVLAV), and 218 to 238 (VALMALELLVGALQAYVFAIL).

It belongs to the ATPase A chain family. As to quaternary structure, F-type ATPases have 2 components, CF(1) - the catalytic core - and CF(0) - the membrane proton channel. CF(1) has five subunits: alpha(3), beta(3), gamma(1), delta(1), epsilon(1). CF(0) has three main subunits: a(1), b(2) and c(9-12). The alpha and beta chains form an alternating ring which encloses part of the gamma chain. CF(1) is attached to CF(0) by a central stalk formed by the gamma and epsilon chains, while a peripheral stalk is formed by the delta and b chains.

It is found in the cell inner membrane. Key component of the proton channel; it plays a direct role in the translocation of protons across the membrane. This is ATP synthase subunit a from Gluconacetobacter diazotrophicus (strain ATCC 49037 / DSM 5601 / CCUG 37298 / CIP 103539 / LMG 7603 / PAl5).